Here is a 381-residue protein sequence, read N- to C-terminus: tRNA (guanine(6)-N2)-methyltransferase (381 aa).

Residues 43–157 form the THUMP domain; that stretch reads KLIPKINYLS…FDELIVGIDT (115 aa). Residues 173–177, 204–206, aspartate 261, 289–290, and asparagine 306 contribute to the S-adenosyl-L-methionine site; these read HPAHL, SGT, and DA.

Belongs to the methyltransferase superfamily.

It is found in the cytoplasm. It catalyses the reaction guanosine(6) in tRNA + S-adenosyl-L-methionine = N(2)-methylguanosine(6) in tRNA + S-adenosyl-L-homocysteine + H(+). S-adenosyl-L-methionine-dependent methyltransferase that catalyzes the methylation of the guanosine nucleotide at position 6 (m2G6) in tRNA(Cys). This is tRNA (guanine(6)-N2)-methyltransferase from Methanocaldococcus jannaschii (strain ATCC 43067 / DSM 2661 / JAL-1 / JCM 10045 / NBRC 100440) (Methanococcus jannaschii).